A 185-amino-acid chain; its full sequence is MIDEALFDAEEKMEKAVSVAREDMATIRTGRANPGMFSRIVIDYYGTHTPITQLASINVPEARMVVIKPYEANQLHAIETAIRNSDLGVNPTNDGTIIRVAVPQLTEERRRDLVKQAKHKGEEARVSVRNIRRKAMEELHRIRKDGEAGEDEVARAEKDLDKSTHQYVAQIDELVKHKEGELLEV.

A disordered region spans residues 143-163 (RKDGEAGEDEVARAEKDLDKS).

It belongs to the RRF family.

The protein localises to the cytoplasm. Its function is as follows. Responsible for the release of ribosomes from messenger RNA at the termination of protein biosynthesis. May increase the efficiency of translation by recycling ribosomes from one round of translation to another. This is Ribosome-recycling factor from Mycobacterium marinum (strain ATCC BAA-535 / M).